Consider the following 160-residue polypeptide: Small ribosomal subunit protein uS9 (160 aa).

Residues 1–18 show a composition bias toward polar residues; it reads MTDTSNSLQDLGTLTGAP. The tract at residues 1–37 is disordered; sequence MTDTSNSLQDLGTLTGAPSAQPVKSVEPKIDAQGRAY.

This sequence belongs to the universal ribosomal protein uS9 family.

This chain is Small ribosomal subunit protein uS9, found in Hyphomonas neptunium (strain ATCC 15444).